A 215-amino-acid chain; its full sequence is GTP-binding nuclear protein ran-1 (215 aa).

The region spanning 6-170 (GIPTFKLVLV…LWLARKLLGD (165 aa)) is the Small GTPase Ran-type domain. 17 to 24 (DGGTGKTT) contributes to the GTP binding site. Residues 36–44 (KKYVATLGV) are switch-I. GTP is bound by residues G67, 121–124 (NKVD), and 149–151 (SAK). A switch-II region spans residues 67-83 (GQEKFGGLRDGYYIQGQ).

This sequence belongs to the small GTPase superfamily. Ran family. Found in a nuclear export complex with RanGTP, exportin and pre-miRNA.

Its subcellular location is the nucleus. It localises to the chromosome. It is found in the centromere. The protein localises to the kinetochore. In terms of biological role, ran GTPase system comprises ran-1, ran-2 and ran-3 and is essential in nucleocytoplasmic transport. Ran-1 is a GTP-binding protein that mediates the interaction between mitotic chromosomes and kinetochore microtubules. Plays a crucial role in nuclear envelope assembly at the end of each cell division. Required for the import of protein into the nucleus and also for RNA export. RCC1 (ran-3)/Ran (ran-1) complex (together with other proteins) acts as a component of a signal transmission pathway that detects unreplicated DNA. This chain is GTP-binding nuclear protein ran-1 (ran-1), found in Caenorhabditis elegans.